Consider the following 201-residue polypeptide: Achaete-scute complex protein T5 (201 aa).

The span at 1-10 (MALGSENHSV) shows a compositional bias: polar residues. A disordered region spans residues 1-32 (MALGSENHSVFNDDEESSSAFNGPSVIRRNAR). Residues 24–90 (PSVIRRNARE…KMAVEYIRRL (67 aa)) form the bHLH domain.

As to quaternary structure, efficient DNA binding requires dimerization with another bHLH protein. As to expression, l(1)SC, SC and AC strongly label the presumptive stomatogastric nervous system, while ASE is more prominent in the presumptive procephalic lobe.

Its function is as follows. AS-C proteins are involved in the determination of the neuronal precursors in the peripheral nervous system and the central nervous system. This is Achaete-scute complex protein T5 (ac) from Drosophila melanogaster (Fruit fly).